Consider the following 509-residue polypeptide: NADH-quinone oxidoreductase subunit M (509 aa).

A helical transmembrane segment spans residues 1–21; it reads MLLPWLILIPFIGGFLCWQTE. The Cytoplasmic portion of the chain corresponds to 22–29; that stretch reads RFGVKVPR. A helical transmembrane segment spans residues 30–50; that stretch reads WIALITMGLTLALSLQLWLQG. Over 51 to 82 the chain is Periplasmic; that stretch reads GYSLTQSAGIPQWQSEFDMPWIPRFGISIHLA. A helical membrane pass occupies residues 83 to 103; that stretch reads IDGLSLLMVVLTGLLGVLAVL. Residues 104 to 121 lie on the Cytoplasmic side of the membrane; the sequence is CSWKEIEKYQGFFHLNLM. A helical transmembrane segment spans residues 122–142; that stretch reads WILGGVIGVFLAIDMFLFFFF. At 143–173 the chain is on the periplasmic side; it reads WEMMLVPMYFLIALWGHKASDGKTRITAATK. A helical membrane pass occupies residues 174 to 194; that stretch reads FFIYTQASGLVMLIAILALVF. Residues 195–221 lie on the Cytoplasmic side of the membrane; it reads VHYNATGVWTFNYEELLNTPMSSGVEY. The chain crosses the membrane as a helical span at residues 222–242; that stretch reads LLMLGFFIAFAVKMPVVPLHG. At 243–258 the chain is on the periplasmic side; it reads WLPDAHSQAPTAGSVD. The chain crosses the membrane as a helical span at residues 259 to 279; the sequence is LAGILLKTAAYGLLRFSLPLF. Residues 280–285 lie on the Cytoplasmic side of the membrane; it reads PNASAE. A helical membrane pass occupies residues 286 to 306; the sequence is FAPIAMWLGVIGIFYGAWMAF. The Periplasmic segment spans residues 307 to 313; it reads AQTDIKR. A helical membrane pass occupies residues 314-334; that stretch reads LIAYTSVSHMGFVLIAIYTGS. The Cytoplasmic portion of the chain corresponds to 335-339; it reads QLAYQ. The helical transmembrane segment at 340-360 threads the bilayer; it reads GAVIQMIAHGLSAAGLFILCG. Residues 361–382 lie on the Periplasmic side of the membrane; that stretch reads QLYERIHTRDMRMMGGLWSKMK. 2 consecutive transmembrane segments (helical) span residues 383–403 and 404–424; these read WLPA…GTGN and FVGE…ITVI. S425 is a topological domain (periplasmic). A helical transmembrane segment spans residues 426–446; sequence TFGLVFASVYSLAMLHRAYFG. Residues 447 to 464 lie on the Cytoplasmic side of the membrane; sequence KAKSQIASQELPGMSLRE. The chain crosses the membrane as a helical span at residues 465–485; that stretch reads LFMILLLVVLLVLLGFYPQPI. Over 486–509 the chain is Periplasmic; the sequence is LDTSHSAIGNIQQWFVNSVTTTRP.

Belongs to the complex I subunit 4 family. In terms of assembly, composed of 13 different subunits. Subunits NuoA, H, J, K, L, M, N constitute the membrane sector of the complex.

Its subcellular location is the cell inner membrane. It carries out the reaction a quinone + NADH + 5 H(+)(in) = a quinol + NAD(+) + 4 H(+)(out). In terms of biological role, NDH-1 shuttles electrons from NADH, via FMN and iron-sulfur (Fe-S) centers, to quinones in the respiratory chain. The immediate electron acceptor for the enzyme in this species is believed to be ubiquinone. Couples the redox reaction to proton translocation (for every two electrons transferred, four hydrogen ions are translocated across the cytoplasmic membrane), and thus conserves the redox energy in a proton gradient. This is NADH-quinone oxidoreductase subunit M (nuoM) from Escherichia coli O157:H7.